A 586-amino-acid polypeptide reads, in one-letter code: Penicillin-binding protein activator LpoA (586 aa).

A signal peptide spans 1-26 (MLSILMQGLRLKKCFLPILVMFFLAG). A lipid anchor (N-palmitoyl cysteine) is attached at C27. C27 is lipidated: S-diacylglycerol cysteine.

This sequence belongs to the LpoA family. As to quaternary structure, interacts with PBP1a.

The protein resides in the cell outer membrane. In terms of biological role, regulator of peptidoglycan synthesis that is essential for the function of penicillin-binding protein 1A (PBP1a). The polypeptide is Penicillin-binding protein activator LpoA (Histophilus somni (strain 2336) (Haemophilus somnus)).